The primary structure comprises 157 residues: Protein Smg (157 aa).

The protein belongs to the Smg family.

In Klebsiella pneumoniae (strain 342), this protein is Protein Smg.